The sequence spans 594 residues: Actin-histidine N-methyltransferase (594 aa).

Positions 1 to 22 are disordered; it reads MGKKSRVKTQKSGTGATATVSP. Residues 10-20 show a composition bias toward polar residues; it reads QKSGTGATATV. S-adenosyl-L-methionine-binding positions include Arg-75, 104-106, Arg-254, 275-279, and 325-327; these read EGF, DMCNH, and SGF. One can recognise an SET domain in the interval 94–314; the sequence is EGFEMVNFKE…AGDQIYIFYG (221 aa). Residues 551 to 594 are disordered; it reads GLVNGENLIPNGTRSENESLSPEESENVTGEESSGSMAKVKERL.

This sequence belongs to the class V-like SAM-binding methyltransferase superfamily. SETD3 actin-histidine methyltransferase family. In terms of assembly, interacts with MYOD1. Post-translationally, phosphorylated by GSK3B, which is required for recognition by the SCF(FBXW7) complex and subsequent degradation. In terms of processing, ubiquitinated by the SCF(FBXW7) complex following phosphorylation by GSK3B, leading to its degradation by the proteasome. As to expression, prominently expressed in the heart and skeletal muscles and is also detected weakly in the stomach, small intestine, and colon.

The protein localises to the cytoplasm. It is found in the nucleus. The catalysed reaction is L-histidyl-[protein] + S-adenosyl-L-methionine = N(tele)-methyl-L-histidyl-[protein] + S-adenosyl-L-homocysteine + H(+). Protein-histidine N-methyltransferase that specifically mediates 3-methylhistidine (tele-methylhistidine) methylation of actin at 'His-73'. Histidine methylation of actin is required for smooth muscle contraction of the laboring uterus during delivery. Does not have protein-lysine N-methyltransferase activity and probably only catalyzes histidine methylation of actin. The chain is Actin-histidine N-methyltransferase from Mus musculus (Mouse).